The chain runs to 334 residues: Spermatogenesis-associated protein 32 (334 aa).

A disordered region spans residues 24 to 98; it reads SDHHRHHHHH…TESPEQQNYR (75 aa). Over residues 37 to 47 the composition is skewed to acidic residues; sequence ENEDEDTEVEA. A compositionally biased stretch (basic and acidic residues) spans 48 to 60; it reads ELPRTEPPPKVDP. The span at 77–98 shows a compositional bias: polar residues; it reads SKTTPETEGDSYTESPEQQNYR. Ser135 and Ser138 each carry phosphoserine.

Interacts with syntaxin-1 and ACTB. As to expression, highly expressed in the testis and weakly in the brain and heart.

In Mus musculus (Mouse), this protein is Spermatogenesis-associated protein 32 (Spata32).